The chain runs to 449 residues: Tubulin alpha chain (449 aa).

The short motif at 1–4 (MREC) is the MREC motif element. Gln-11 lines the GTP pocket. Lys-40 is modified (N6-acetyllysine). 7 residues coordinate GTP: Glu-71, Ser-140, Gly-144, Thr-145, Thr-179, Asn-206, and Asn-228. Residue Glu-71 participates in Mg(2+) binding. The active site involves Glu-254. Glu-443 carries the 5-glutamyl polyglutamate modification.

Belongs to the tubulin family. As to quaternary structure, dimer of alpha and beta chains. A typical microtubule is a hollow water-filled tube with an outer diameter of 25 nm and an inner diameter of 15 nM. Alpha-beta heterodimers associate head-to-tail to form protofilaments running lengthwise along the microtubule wall with the beta-tubulin subunit facing the microtubule plus end conferring a structural polarity. Microtubules usually have 13 protofilaments but different protofilament numbers can be found in some organisms and specialized cells. Mg(2+) is required as a cofactor. Some glutamate residues at the C-terminus are polyglycylated, resulting in polyglycine chains on the gamma-carboxyl group. Glycylation is mainly limited to tubulin incorporated into axonemes (cilia and flagella) whereas glutamylation is prevalent in neuronal cells, centrioles, axonemes, and the mitotic spindle. Both modifications can coexist on the same protein on adjacent residues, and lowering polyglycylation levels increases polyglutamylation, and reciprocally. The precise function of polyglycylation is still unclear. In terms of processing, some glutamate residues at the C-terminus are polyglutamylated, resulting in polyglutamate chains on the gamma-carboxyl group. Polyglutamylation plays a key role in microtubule severing by spastin (SPAST). SPAST preferentially recognizes and acts on microtubules decorated with short polyglutamate tails: severing activity by SPAST increases as the number of glutamates per tubulin rises from one to eight, but decreases beyond this glutamylation threshold. Post-translationally, acetylation of alpha chains at Lys-40 is located inside the microtubule lumen. This modification has been correlated with increased microtubule stability, intracellular transport and ciliary assembly. Undergoes a tyrosination/detyrosination cycle, the cyclic removal and re-addition of a C-terminal tyrosine residue by the enzymes tubulin tyrosine carboxypeptidase (MATCAP1, VASH1 or VASH2) and tubulin tyrosine ligase (TTL), respectively. In terms of processing, tyrosination promotes microtubule interaction with CAP-Gly microtubule plus-end tracking proteins. Tyrosinated tubulins regulate the initiation of dynein-driven motility. Post-translationally, detyrosination is involved in metaphase plate congression by guiding chromosomes during mitosis. Detyrosination increases microtubules-dependent mechanotransduction in dystrophic cardiac and skeletal muscle. In cardiomyocytes, detyrosinated microtubules are required to resist to contractile compression during contraction.

It localises to the cytoplasm. The protein localises to the cytoskeleton. It carries out the reaction GTP + H2O = GDP + phosphate + H(+). Tubulin is the major constituent of microtubules, a cylinder consisting of laterally associated linear protofilaments composed of alpha- and beta-tubulin heterodimers. Microtubules grow by the addition of GTP-tubulin dimers to the microtubule end, where a stabilizing cap forms. Below the cap, tubulin dimers are in GDP-bound state, owing to GTPase activity of alpha-tubulin. This chain is Tubulin alpha chain (tuba), found in Xenopus tropicalis (Western clawed frog).